A 285-amino-acid polypeptide reads, in one-letter code: HTH-type transcriptional regulator MurR (285 aa).

Positions 1-77 (MLYLTKISNA…MALIGEYSAS (77 aa)) constitute an HTH rpiR-type domain. Residues 37 to 56 (SRQMAKQLGISQSSIVKFAQ) constitute a DNA-binding region (H-T-H motif). In terms of domain architecture, SIS spans 128–268 (IIEVISKAPF…FVGLVQLNDV (141 aa)).

As to quaternary structure, homotetramer.

The protein operates within amino-sugar metabolism; N-acetylmuramate degradation [regulation]. Represses the expression of the murPQ operon involved in the uptake and degradation of N-acetylmuramic acid (MurNAc). Binds to two adjacent inverted repeats within the operator region. MurNAc 6-phosphate, the substrate of MurQ, is the specific inducer that weakens binding of MurR to the operator. In Escherichia coli O139:H28 (strain E24377A / ETEC), this protein is HTH-type transcriptional regulator MurR.